The chain runs to 157 residues: Histone H2B.3 (157 aa).

A disordered region spans residues 1 to 64; the sequence is MAPKKEEKPA…DKKSKKKAKV (64 aa). Basic residues predominate over residues 26–42; sequence KAVKAPKKKEKKAPAKK. K153 is covalently cross-linked (Glycyl lysine isopeptide (Lys-Gly) (interchain with G-Cter in ubiquitin)).

This sequence belongs to the histone H2B family. In terms of assembly, the nucleosome is a histone octamer containing two molecules each of H2A, H2B, H3 and H4 assembled in one H3-H4 heterotetramer and two H2A-H2B heterodimers. The octamer wraps approximately 147 bp of DNA. Post-translationally, monoubiquitinated to form H2BK143ub1; may give a specific tag for epigenetic transcriptional activation.

It localises to the nucleus. The protein localises to the chromosome. Functionally, core component of nucleosome. Nucleosomes wrap and compact DNA into chromatin, limiting DNA accessibility to the cellular machineries which require DNA as a template. Histones thereby play a central role in transcription regulation, DNA repair, DNA replication and chromosomal stability. DNA accessibility is regulated via a complex set of post-translational modifications of histones, also called histone code, and nucleosome remodeling. The polypeptide is Histone H2B.3 (Volvox carteri (Green alga)).